We begin with the raw amino-acid sequence, 82 residues long: Translation initiation factor IF-1, chloroplastic (82 aa).

An S1-like domain is found at 1 to 72 (MNKQNLIDVE…TKGRIIYRLR (72 aa)).

Belongs to the IF-1 family. In terms of assembly, component of the 30S ribosomal translation pre-initiation complex which assembles on the 30S ribosome in the order IF-2 and IF-3, IF-1 and N-formylmethionyl-tRNA(fMet); mRNA recruitment can occur at any time during PIC assembly.

The protein localises to the plastid. It localises to the chloroplast. Functionally, one of the essential components for the initiation of protein synthesis. Stabilizes the binding of IF-2 and IF-3 on the 30S subunit to which N-formylmethionyl-tRNA(fMet) subsequently binds. Helps modulate mRNA selection, yielding the 30S pre-initiation complex (PIC). Upon addition of the 50S ribosomal subunit IF-1, IF-2 and IF-3 are released leaving the mature 70S translation initiation complex. This Cycas taitungensis (Prince sago) protein is Translation initiation factor IF-1, chloroplastic.